A 314-amino-acid polypeptide reads, in one-letter code: Signal peptidase I (314 aa).

A helical transmembrane segment spans residues 5-25; it reads LTIFLLISTLVTGIFWSFYCI. Residues 26–63 are Cytoplasmic-facing; it reads KSFKNYLINKKIINNNNFHQEKIEKSKNKTYFLKSLAS. A helical transmembrane segment spans residues 64–84; that stretch reads FFPIFLAIFIIRSFIYEPFQI. At 85–314 the chain is on the extracellular side; it reads PSGSMMPTLL…IRINRIGSIH (230 aa). Active-site residues include serine 88 and lysine 143.

It belongs to the peptidase S26 family.

It is found in the cell membrane. It carries out the reaction Cleavage of hydrophobic, N-terminal signal or leader sequences from secreted and periplasmic proteins.. The sequence is that of Signal peptidase I (lepB) from Buchnera aphidicola subsp. Acyrthosiphon pisum (strain APS) (Acyrthosiphon pisum symbiotic bacterium).